The chain runs to 270 residues: Thiazole synthase (270 aa).

K112 acts as the Schiff-base intermediate with DXP in catalysis. 1-deoxy-D-xylulose 5-phosphate contacts are provided by residues G173, 199–200, and 221–222; these read AG and NS.

The protein belongs to the ThiG family. In terms of assembly, homotetramer. Forms heterodimers with either ThiH or ThiS.

The protein localises to the cytoplasm. It carries out the reaction [ThiS sulfur-carrier protein]-C-terminal-Gly-aminoethanethioate + 2-iminoacetate + 1-deoxy-D-xylulose 5-phosphate = [ThiS sulfur-carrier protein]-C-terminal Gly-Gly + 2-[(2R,5Z)-2-carboxy-4-methylthiazol-5(2H)-ylidene]ethyl phosphate + 2 H2O + H(+). Its pathway is cofactor biosynthesis; thiamine diphosphate biosynthesis. Its function is as follows. Catalyzes the rearrangement of 1-deoxy-D-xylulose 5-phosphate (DXP) to produce the thiazole phosphate moiety of thiamine. Sulfur is provided by the thiocarboxylate moiety of the carrier protein ThiS. In vitro, sulfur can be provided by H(2)S. The polypeptide is Thiazole synthase (Pseudomonas entomophila (strain L48)).